A 344-amino-acid polypeptide reads, in one-letter code: MPRPRVSELSQRQAPRLRSSSSTSDSNHSNRLITTDQSFKPGVDRKSPRSGGPNSDPLGQKKLGGRISDLESQLGQAQEELRLLKEQLANAEAVKKQAQDELHKKSKKPNPLARVEESATEAERIDRDEIPGDVQKETDVFEVPVEKIAVEEEELRSGNDEAEKLVAKEDEIKMLKARLYDMEKEHESLGKENESLKNQLSDSASEISNVKANEDEMVSKVSRIGEELEESRAKTAHLKEKLESMEEAKDALEAEMKKLRVQTEQWRKAADAAAAVLSGEFEMNGRDRSGSTEKYYAGGFFDPSAGFMDPPGMADDYDDGLGSGKRKSSGMKMFGELWRKKGQK.

Disordered regions lie at residues 1–74 (MPRP…ESQL), 92–139 (EAVK…KETD), 186–218 (HESLGKENESLKNQLSDSASEISNVKANEDEMV), and 307–344 (FMDPPGMADDYDDGLGSGKRKSSGMKMFGELWRKKGQK). The span at 19-29 (SSSSTSDSNHS) shows a compositional bias: low complexity. Residues 60–108 (QKKLGGRISDLESQLGQAQEELRLLKEQLANAEAVKKQAQDELHKKSKK) adopt a coiled-coil conformation. Composition is skewed to basic and acidic residues over residues 93 to 103 (AVKKQAQDELH), 114 to 139 (RVEESATEAERIDRDEIPGDVQKETD), and 186 to 195 (HESLGKENES). The stretch at 145-273 (VEKIAVEEEE…EQWRKAADAA (129 aa)) forms a coiled coil. A compositionally biased stretch (polar residues) spans 196–211 (LKNQLSDSASEISNVK).

The protein belongs to the ICR family. In terms of assembly, homooligomer. Interacts with ARAC3, ARAC4, ARAC8, ARAC11 and SEC3A, but not with ICR2 or EXO70A1. In terms of tissue distribution, expressed in mature and germinating pollen. Expressed throughout the embryo but not in the hypophysis and quiescent center (QC). In roots, absent from the QC and the stem cells.

It localises to the cell membrane. Its subcellular location is the nucleus. In terms of biological role, acts as a scaffold, mediating interaction of ROPs with different proteins. Required for primary and adventitious root maintenance, but not for their formation. Promotes the stabilization of ARAC11 on the plasma membrane of the pollen tube initiation site but not the activation of ARAC11. Regulates directionality of polar auxin transport, and is required for the formation of a stable auxin maximum and tip localized auxin gradient during embryogenesis, organogenesis, and meristem activity. Involved in exocytosis and in the recycling of PIN proteins back to the plasma membrane. The sequence is that of Interactor of constitutive active ROPs 1 (ICR1) from Arabidopsis thaliana (Mouse-ear cress).